Consider the following 294-residue polypeptide: tRNA pseudouridine synthase B (294 aa).

The active-site Nucleophile is the aspartate 39.

Belongs to the pseudouridine synthase TruB family. Type 1 subfamily.

It carries out the reaction uridine(55) in tRNA = pseudouridine(55) in tRNA. Functionally, responsible for synthesis of pseudouridine from uracil-55 in the psi GC loop of transfer RNAs. The polypeptide is tRNA pseudouridine synthase B (Streptococcus pyogenes serotype M6 (strain ATCC BAA-946 / MGAS10394)).